The sequence spans 619 residues: 1-deoxy-D-xylulose-5-phosphate synthase (619 aa).

Thiamine diphosphate is bound by residues His74 and Gly115–Ser117. A Mg(2+)-binding site is contributed by Asp146. Thiamine diphosphate is bound by residues Gly147–Ala148, Asn175, Tyr285, and Glu365. Mg(2+) is bound at residue Asn175.

This sequence belongs to the transketolase family. DXPS subfamily. As to quaternary structure, homodimer. Mg(2+) serves as cofactor. It depends on thiamine diphosphate as a cofactor.

It carries out the reaction D-glyceraldehyde 3-phosphate + pyruvate + H(+) = 1-deoxy-D-xylulose 5-phosphate + CO2. It participates in metabolic intermediate biosynthesis; 1-deoxy-D-xylulose 5-phosphate biosynthesis; 1-deoxy-D-xylulose 5-phosphate from D-glyceraldehyde 3-phosphate and pyruvate: step 1/1. Catalyzes the acyloin condensation reaction between C atoms 2 and 3 of pyruvate and glyceraldehyde 3-phosphate to yield 1-deoxy-D-xylulose-5-phosphate (DXP). The polypeptide is 1-deoxy-D-xylulose-5-phosphate synthase (Clostridium acetobutylicum (strain ATCC 824 / DSM 792 / JCM 1419 / IAM 19013 / LMG 5710 / NBRC 13948 / NRRL B-527 / VKM B-1787 / 2291 / W)).